Here is a 421-residue protein sequence, read N- to C-terminus: Serine hydroxymethyltransferase (421 aa).

(6S)-5,6,7,8-tetrahydrofolate-binding positions include Leu121 and Gly125–Leu127. An N6-(pyridoxal phosphate)lysine modification is found at Lys229.

Belongs to the SHMT family. Homodimer. It depends on pyridoxal 5'-phosphate as a cofactor.

Its subcellular location is the cytoplasm. The catalysed reaction is (6R)-5,10-methylene-5,6,7,8-tetrahydrofolate + glycine + H2O = (6S)-5,6,7,8-tetrahydrofolate + L-serine. It functions in the pathway one-carbon metabolism; tetrahydrofolate interconversion. The protein operates within amino-acid biosynthesis; glycine biosynthesis; glycine from L-serine: step 1/1. Catalyzes the reversible interconversion of serine and glycine with tetrahydrofolate (THF) serving as the one-carbon carrier. This reaction serves as the major source of one-carbon groups required for the biosynthesis of purines, thymidylate, methionine, and other important biomolecules. Also exhibits THF-independent aldolase activity toward beta-hydroxyamino acids, producing glycine and aldehydes, via a retro-aldol mechanism. The polypeptide is Serine hydroxymethyltransferase (Actinobacillus pleuropneumoniae serotype 7 (strain AP76)).